The following is a 299-amino-acid chain: ATP phosphoribosyltransferase (299 aa).

This sequence belongs to the ATP phosphoribosyltransferase family. Long subfamily. Requires Mg(2+) as cofactor.

The protein resides in the cytoplasm. The enzyme catalyses 1-(5-phospho-beta-D-ribosyl)-ATP + diphosphate = 5-phospho-alpha-D-ribose 1-diphosphate + ATP. It participates in amino-acid biosynthesis; L-histidine biosynthesis; L-histidine from 5-phospho-alpha-D-ribose 1-diphosphate: step 1/9. Its activity is regulated as follows. Feedback inhibited by histidine. Functionally, catalyzes the condensation of ATP and 5-phosphoribose 1-diphosphate to form N'-(5'-phosphoribosyl)-ATP (PR-ATP). Has a crucial role in the pathway because the rate of histidine biosynthesis seems to be controlled primarily by regulation of HisG enzymatic activity. The protein is ATP phosphoribosyltransferase of Rhodopirellula baltica (strain DSM 10527 / NCIMB 13988 / SH1).